The chain runs to 56 residues: UPF0434 protein WIGBR2520 (56 aa).

Belongs to the UPF0434 family.

The polypeptide is UPF0434 protein WIGBR2520 (Wigglesworthia glossinidia brevipalpis).